A 155-amino-acid polypeptide reads, in one-letter code: DNA-binding protein inhibitor ID-1 (155 aa).

Positions 53 to 105 constitute a bHLH domain; sequence LPALLDEQQVNVLLYDMNGCYSRLKELVPTLPQNRKVSKVEILQHVIDYIRDL. A Nuclear export signal motif is present at residues 98–111; sequence VIDYIRDLQLELNS.

In terms of assembly, heterodimer with other HLH proteins. Interacts with COPS5, IFI204, GATA4 and NKX2-5. Interacts with CLOCK and BMAL1.

It localises to the cytoplasm. Its subcellular location is the nucleus. Transcriptional regulator (lacking a basic DNA binding domain) which negatively regulates the basic helix-loop-helix (bHLH) transcription factors by forming heterodimers and inhibiting their DNA binding and transcriptional activity. Implicated in regulating a variety of cellular processes, including cellular growth, senescence, differentiation, apoptosis, angiogenesis, and neoplastic transformation. Inhibits skeletal muscle and cardiac myocyte differentiation. Regulates the circadian clock by repressing the transcriptional activator activity of the CLOCK-BMAL1 heterodimer. This Homo sapiens (Human) protein is DNA-binding protein inhibitor ID-1 (ID1).